Here is a 358-residue protein sequence, read N- to C-terminus: Naringenin,2-oxoglutarate 3-dioxygenase (358 aa).

Positions 190-294 (CVDMDQKIVV…RLSIATFQNP (105 aa)) constitute a Fe2OG dioxygenase domain. Fe cation is bound by residues histidine 217, aspartate 219, and histidine 275. Arginine 285 contacts 2-oxoglutarate.

This sequence belongs to the iron/ascorbate-dependent oxidoreductase family. In terms of assembly, interacts with Dihydroflavonol-4-reductase (TT3), chalcone synthase (TT4) and chalcone isomerase (TT5) to form a flavonoid enzyme complex. The cofactor is Fe(2+). It depends on L-ascorbate as a cofactor.

The catalysed reaction is a (2S)-flavan-4-one + 2-oxoglutarate + O2 = a (2R,3R)-dihydroflavonol + succinate + CO2. It functions in the pathway secondary metabolite biosynthesis; flavonoid biosynthesis. Its function is as follows. Catalyzes the 3-beta-hydroxylation of 2S-flavanones to 2R,3R-dihydroflavonols which are intermediates in the biosynthesis of flavonols, anthocyanidins, catechins and proanthocyanidins in plants. The protein is Naringenin,2-oxoglutarate 3-dioxygenase (F3H) of Arabidopsis thaliana (Mouse-ear cress).